We begin with the raw amino-acid sequence, 79 residues long: Protein S100-G (79 aa).

Ser-2 is modified (N-acetylserine). EF-hand domains follow at residues 13–48 and 45–79; these read IFEK…KGPN and KGPN…KISQ. The Ca(2+) site is built by Gln-26 and Glu-31. At Ser-42 the chain carries Phosphoserine. The Ca(2+) site is built by Asp-58, Asn-60, Asp-62, Glu-64, and Glu-69.

It belongs to the S-100 family.

This is Protein S100-G (S100G) from Homo sapiens (Human).